Reading from the N-terminus, the 490-residue chain is Tektin-3 (490 aa).

O-linked (GalNAc...) threonine glycans are attached at residues Thr7 and Thr9. N-linked (GlcNAc...) asparagine glycans are attached at residues Asn41, Asn86, Asn111, and Asn276. The stretch at 419-456 (RLVNEVYEVDETIQTLQQRLRDSEDTLQSLAHTKATLE) forms a coiled coil.

It belongs to the tektin family. In terms of assembly, microtubule inner protein component of sperm flagellar doublet microtubules. Interacts with TEKT1, TEKT2, TEKT4 and TEKT5. Interacts with CCDC38. N- and O-glycosylated. In terms of processing, may be proteolytically processed during the epididymal transit of spermatozoa. Post-translationally, ubiquitinated, leading to its degradation. Deubiquitinated by USP16, promoting its stability. In terms of tissue distribution, expressed in epididymal sperm (at protein level).

It localises to the cytoplasm. The protein resides in the cytoskeleton. It is found in the cilium axoneme. Its subcellular location is the flagellum axoneme. The protein localises to the cytoplasmic vesicle. It localises to the secretory vesicle. The protein resides in the acrosome outer membrane. In terms of biological role, microtubule inner protein (MIP) part of the dynein-decorated doublet microtubules (DMTs) in cilia and flagellar axoneme. Forms filamentous polymers in the walls of ciliary and flagellar microtubules. Required for normal sperm mobility. The chain is Tektin-3 (Tekt3) from Rattus norvegicus (Rat).